The chain runs to 188 residues: MGANEDQEMELEALRSIYEGDNSFRELSPVSFQYRIGEDGDPKAFLIEVSWTETYPQTAPVISMNAFFNNTISSAVKQSILAKLQEAVEVNLGTAMTYTLFEYAKDHKEQFMENHHPGNSATPVANIISVETPTTAPSSKKKEKKEQLSKAQKRKLADKTDHKGELPRGWNWVDVVKHLSKTGSKDDE.

Residues 9–111 (MELEALRSIY…EYAKDHKEQF (103 aa)) form the RWD domain. The interval 132-167 (TPTTAPSSKKKEKKEQLSKAQKRKLADKTDHKGELP) is disordered. Positions 155 to 166 (KLADKTDHKGEL) are enriched in basic and acidic residues.

This Mus musculus (Mouse) protein is RWD domain-containing protein 4 (Rwdd4).